The following is a 317-amino-acid chain: Ribosomal protein L11 methyltransferase (317 aa).

S-adenosyl-L-methionine is bound by residues Thr158, Gly179, Asp201, and Asn244.

The protein belongs to the methyltransferase superfamily. PrmA family.

It is found in the cytoplasm. It carries out the reaction L-lysyl-[protein] + 3 S-adenosyl-L-methionine = N(6),N(6),N(6)-trimethyl-L-lysyl-[protein] + 3 S-adenosyl-L-homocysteine + 3 H(+). Its function is as follows. Methylates ribosomal protein L11. The protein is Ribosomal protein L11 methyltransferase of Streptococcus agalactiae serotype III (strain NEM316).